Here is a 353-residue protein sequence, read N- to C-terminus: tRNA-specific 2-thiouridylase MnmA 2 (353 aa).

6-13 contributes to the ATP binding site; the sequence is LLSGGVDS. An interaction with target base in tRNA region spans residues 92-94; that stretch reads NPD. The Nucleophile role is filled by Cys97. Cys97 and Cys192 form a disulfide bridge. Gly120 provides a ligand contact to ATP. The interval 142–144 is interaction with tRNA; sequence KDQ. The active-site Cysteine persulfide intermediate is the Cys192.

This sequence belongs to the MnmA/TRMU family.

Its subcellular location is the cytoplasm. It carries out the reaction S-sulfanyl-L-cysteinyl-[protein] + uridine(34) in tRNA + AH2 + ATP = 2-thiouridine(34) in tRNA + L-cysteinyl-[protein] + A + AMP + diphosphate + H(+). Its function is as follows. Catalyzes the 2-thiolation of uridine at the wobble position (U34) of tRNA, leading to the formation of s(2)U34. In Bacteroides fragilis (strain YCH46), this protein is tRNA-specific 2-thiouridylase MnmA 2.